The primary structure comprises 120 residues: SAGA-associated factor 11 (120 aa).

Over residues 40-60 (SLLNSSNSNTNSNTNGTIASN) the composition is skewed to low complexity. Residues 40–82 (SLLNSSNSNTNSNTNGTIASNGGNGTTSDENNEIENSTIQDKS) are disordered. An SGF11-type zinc finger spans residues 93–114 (FRCLNCGRNIAGGRFASHISKC).

It belongs to the SGF11 family. In terms of assembly, component of the 1.8 MDa SAGA transcription coactivator-HAT complex. SAGA is built of 5 distinct domains with specialized functions. Within the SAGA complex, SUS1, SGF11, SGF73 and UBP8 form an additional subcomplex of SAGA called the DUB module (deubiquitination module). Interacts directly with SGF73, SUS1 and UBP8.

The protein localises to the nucleus. Its function is as follows. Functions as a component of the transcription regulatory histone acetylation (HAT) complex SAGA. At the promoters, SAGA is required for recruitment of the basal transcription machinery. It influences RNA polymerase II transcriptional activity through different activities such as TBP interaction and promoter selectivity, interaction with transcription activators, and chromatin modification through histone acetylation and deubiquitination. SAGA acetylates nucleosomal histone H3 to some extent (to form H3K9ac, H3K14ac, H3K18ac and H3K23ac). SAGA interacts with DNA via upstream activating sequences (UASs). Involved in transcriptional regulation of a subset of SAGA-regulated genes. Within the SAGA complex, participates in a subcomplex, that specifically deubiquitinates histones H2B. This is SAGA-associated factor 11 from Candida albicans (strain SC5314 / ATCC MYA-2876) (Yeast).